Consider the following 126-residue polypeptide: Large ribosomal subunit protein bL12 (126 aa).

This sequence belongs to the bacterial ribosomal protein bL12 family. As to quaternary structure, homodimer. Part of the ribosomal stalk of the 50S ribosomal subunit. Forms a multimeric L10(L12)X complex, where L10 forms an elongated spine to which 2 to 4 L12 dimers bind in a sequential fashion. Binds GTP-bound translation factors.

Functionally, forms part of the ribosomal stalk which helps the ribosome interact with GTP-bound translation factors. Is thus essential for accurate translation. The chain is Large ribosomal subunit protein bL12 from Bifidobacterium longum (strain DJO10A).